Here is a 1386-residue protein sequence, read N- to C-terminus: DNA-directed RNA polymerase subunit beta' (1386 aa).

Residues Cys75, Cys77, Cys90, and Cys93 each coordinate Zn(2+). Mg(2+)-binding residues include Asp466, Asp468, and Asp470. 4 residues coordinate Zn(2+): Cys809, Cys883, Cys890, and Cys893.

Belongs to the RNA polymerase beta' chain family. As to quaternary structure, the RNAP catalytic core consists of 2 alpha, 1 beta, 1 beta' and 1 omega subunit. When a sigma factor is associated with the core the holoenzyme is formed, which can initiate transcription. It depends on Mg(2+) as a cofactor. The cofactor is Zn(2+).

It catalyses the reaction RNA(n) + a ribonucleoside 5'-triphosphate = RNA(n+1) + diphosphate. Functionally, DNA-dependent RNA polymerase catalyzes the transcription of DNA into RNA using the four ribonucleoside triphosphates as substrates. The sequence is that of DNA-directed RNA polymerase subunit beta' from Oleidesulfovibrio alaskensis (strain ATCC BAA-1058 / DSM 17464 / G20) (Desulfovibrio alaskensis).